The following is a 142-amino-acid chain: Struthiocalcin-2 (142 aa).

3 disulfides stabilise this stretch: cysteine 6-cysteine 17, cysteine 34-cysteine 138, and cysteine 113-cysteine 130. One can recognise a C-type lectin domain in the interval 13–139; it reads FDGRCYGFFP…CSDRKPFICE (127 aa). Phosphoserine occurs at positions 62, 66, and 68.

The protein resides in the secreted. It is found in the extracellular space. It localises to the extracellular matrix. The polypeptide is Struthiocalcin-2 (Struthio camelus (Common ostrich)).